Consider the following 495-residue polypeptide: ATP synthase subunit beta, chloroplastic (495 aa).

An ATP-binding site is contributed by 172–179 (GGAGVGKT).

It belongs to the ATPase alpha/beta chains family. In terms of assembly, F-type ATPases have 2 components, CF(1) - the catalytic core - and CF(0) - the membrane proton channel. CF(1) has five subunits: alpha(3), beta(3), gamma(1), delta(1), epsilon(1). CF(0) has four main subunits: a(1), b(1), b'(1) and c(9-12).

The protein resides in the plastid. It is found in the chloroplast thylakoid membrane. It catalyses the reaction ATP + H2O + 4 H(+)(in) = ADP + phosphate + 5 H(+)(out). Functionally, produces ATP from ADP in the presence of a proton gradient across the membrane. The catalytic sites are hosted primarily by the beta subunits. The protein is ATP synthase subunit beta, chloroplastic of Beaucarnea recurvata (Elephant-foot tree).